The chain runs to 513 residues: E3 ubiquitin-protein ligase XBAT33 (513 aa).

5 ANK repeats span residues 44–73, 77–106, 111–140, 171–200, and 214–244; these read GLNSPLHFAAAKGHNEIVGLLLENGADVNS, CGQTALMQACRYGHWEVVQTLLLFRCNVTR, AGRTALHFAAVNGHARCIRLVLADFLPSDK, GGITALHMAALNGLFDCVQLLLDLEANVSA, and AGSTPLHYAACGGNLKCCQILLARGARKMTL. The RING-type zinc finger occupies 312 to 362; it reads CAVCLERTCTVAAEGCEHQLCVRCALYLCSSSNVPSVTVGPPGSIPCPLCR. Disordered regions lie at residues 397–417 and 455–483; these read DTTDQSSPTCPPTEQRSSKTR and HGTERHSEEHVESSPSRTTTEQEKIEEGQ. 2 stretches are compositionally biased toward basic and acidic residues: residues 455–466 and 474–483; these read HGTERHSEEHVE and TEQEKIEEGQ.

It carries out the reaction S-ubiquitinyl-[E2 ubiquitin-conjugating enzyme]-L-cysteine + [acceptor protein]-L-lysine = [E2 ubiquitin-conjugating enzyme]-L-cysteine + N(6)-ubiquitinyl-[acceptor protein]-L-lysine.. The protein operates within protein modification; protein ubiquitination. Possesses E3 ubiquitin-protein ligase activity when associated with the E2 enzyme UBC8 in vitro. This is E3 ubiquitin-protein ligase XBAT33 (XBAT33) from Arabidopsis thaliana (Mouse-ear cress).